The chain runs to 167 residues: uncharacterized protein (167 aa).

The segment at 115 to 167 (SYRSQPQLGFKSTPPAHSSVFHHSVKAPKEDQAQEAASRPLTSQDGWNPNIKK) is disordered.

This is an uncharacterized protein from Homo sapiens (Human).